A 155-amino-acid chain; its full sequence is Large ribosomal subunit protein eL24 (155 aa).

A disordered region spans residues 92–155 (AKRNMKPEVR…KSAPRVGGKR (64 aa)). The segment covering 96–117 (MKPEVRKAQRDQAIKAAKEQKK) has biased composition (basic and acidic residues). Residues 124–133 (KASAPAPKAK) are compositionally biased toward low complexity.

Belongs to the eukaryotic ribosomal protein eL24 family.

The chain is Large ribosomal subunit protein eL24 (RpL24) from Spodoptera frugiperda (Fall armyworm).